Consider the following 226-residue polypeptide: Lipoprotein-releasing system ATP-binding protein LolD 1 (226 aa).

The ABC transporter domain occupies 6–226 (LRLDKVTRSF…TLREGKVVAA (221 aa)). 42-49 (GPSGAGKS) is a binding site for ATP.

The protein belongs to the ABC transporter superfamily. Lipoprotein translocase (TC 3.A.1.125) family. The complex is composed of two ATP-binding proteins (LolD) and two transmembrane proteins (LolC and LolE).

The protein localises to the cell inner membrane. Its function is as follows. Part of the ABC transporter complex LolCDE involved in the translocation of mature outer membrane-directed lipoproteins, from the inner membrane to the periplasmic chaperone, LolA. Responsible for the formation of the LolA-lipoprotein complex in an ATP-dependent manner. The polypeptide is Lipoprotein-releasing system ATP-binding protein LolD 1 (Rhodospirillum rubrum (strain ATCC 11170 / ATH 1.1.1 / DSM 467 / LMG 4362 / NCIMB 8255 / S1)).